The primary structure comprises 274 residues: Formamidopyrimidine-DNA glycosylase (274 aa).

P2 acts as the Schiff-base intermediate with DNA in catalysis. E3 acts as the Proton donor in catalysis. K58 acts as the Proton donor; for beta-elimination activity in catalysis. Residues H91 and R110 each contribute to the DNA site. An FPG-type zinc finger spans residues Q238 to R272. R262 serves as the catalytic Proton donor; for delta-elimination activity.

The protein belongs to the FPG family. As to quaternary structure, monomer. The cofactor is Zn(2+).

It carries out the reaction Hydrolysis of DNA containing ring-opened 7-methylguanine residues, releasing 2,6-diamino-4-hydroxy-5-(N-methyl)formamidopyrimidine.. The catalysed reaction is 2'-deoxyribonucleotide-(2'-deoxyribose 5'-phosphate)-2'-deoxyribonucleotide-DNA = a 3'-end 2'-deoxyribonucleotide-(2,3-dehydro-2,3-deoxyribose 5'-phosphate)-DNA + a 5'-end 5'-phospho-2'-deoxyribonucleoside-DNA + H(+). Functionally, involved in base excision repair of DNA damaged by oxidation or by mutagenic agents. Acts as a DNA glycosylase that recognizes and removes damaged bases. Has a preference for oxidized purines, such as 7,8-dihydro-8-oxoguanine (8-oxoG). Has AP (apurinic/apyrimidinic) lyase activity and introduces nicks in the DNA strand. Cleaves the DNA backbone by beta-delta elimination to generate a single-strand break at the site of the removed base with both 3'- and 5'-phosphates. The polypeptide is Formamidopyrimidine-DNA glycosylase (Streptococcus pneumoniae (strain ATCC BAA-255 / R6)).